A 506-amino-acid chain; its full sequence is MKEYQVYLERARSRQQDFLYPLIFREYIYGLAYSHNWNRSIFVENGGYDDKYSLLNVKRLITRMYQQNHLIISTNDSNKNPFWGYNKNFYSQTISEGFAIVVEIPFFLQLSSSLEEAEIIKSYKNVRSIHSIFPFLEDKFTYLNYVSDIRIPYPIHLEILVQILRYWVKDAPFFHLLRLFLYHFSNWNRFITTKKSISTFSKSNPRLFLFLYNFYVCEYESIFLFLRNKSSHLRLKSFSVFLERIFFYAKREHLVEVFAKDFSYPLPFFKDPNIHYVRYQGKCILASKNVPFLMNKWKHYFIHLWQCFFDVWSQPRTININQLSEHSFQLLGYFSNVRLNRSVVRSQMLQNTFLIEIVSKKLDIIVPIIPLIRSLAKAKFCNVLGHPISKPVWADSSDFDIIERFLRICRNLSHYYNGSSKKKSLYRIKYILRLSCIKTLACKHKSTVRAFLKRSGSEELLEEFFTEEEEILSLIFPRDSFTLHRFYRNRIWYLDILFSNDLVNDE.

Belongs to the intron maturase 2 family. MatK subfamily.

It localises to the plastid. Its subcellular location is the chloroplast. Its function is as follows. Usually encoded in the trnK tRNA gene intron. Probably assists in splicing its own and other chloroplast group II introns. In Trifolium hirtum (Rose clover), this protein is Maturase K.